A 331-amino-acid chain; its full sequence is Aspartate carbamoyltransferase catalytic subunit (331 aa).

Carbamoyl phosphate is bound by residues arginine 55 and threonine 56. Lysine 84 is an L-aspartate binding site. Arginine 105, histidine 133, and glutamine 136 together coordinate carbamoyl phosphate. L-aspartate-binding residues include arginine 166 and arginine 229. Residues leucine 268 and proline 269 each contribute to the carbamoyl phosphate site.

It belongs to the aspartate/ornithine carbamoyltransferase superfamily. ATCase family. In terms of assembly, heterododecamer (2C3:3R2) of six catalytic PyrB chains organized as two trimers (C3), and six regulatory PyrI chains organized as three dimers (R2).

The enzyme catalyses carbamoyl phosphate + L-aspartate = N-carbamoyl-L-aspartate + phosphate + H(+). It functions in the pathway pyrimidine metabolism; UMP biosynthesis via de novo pathway; (S)-dihydroorotate from bicarbonate: step 2/3. In terms of biological role, catalyzes the condensation of carbamoyl phosphate and aspartate to form carbamoyl aspartate and inorganic phosphate, the committed step in the de novo pyrimidine nucleotide biosynthesis pathway. In Alkaliphilus oremlandii (strain OhILAs) (Clostridium oremlandii (strain OhILAs)), this protein is Aspartate carbamoyltransferase catalytic subunit.